Reading from the N-terminus, the 378-residue chain is Transaldolase 1 (378 aa).

Lys146 functions as the Schiff-base intermediate with substrate in the catalytic mechanism.

It belongs to the transaldolase family. Type 2 subfamily.

The protein localises to the cytoplasm. It carries out the reaction D-sedoheptulose 7-phosphate + D-glyceraldehyde 3-phosphate = D-erythrose 4-phosphate + beta-D-fructose 6-phosphate. It functions in the pathway carbohydrate degradation; pentose phosphate pathway; D-glyceraldehyde 3-phosphate and beta-D-fructose 6-phosphate from D-ribose 5-phosphate and D-xylulose 5-phosphate (non-oxidative stage): step 2/3. In terms of biological role, transaldolase is important for the balance of metabolites in the pentose-phosphate pathway. In Streptomyces avermitilis (strain ATCC 31267 / DSM 46492 / JCM 5070 / NBRC 14893 / NCIMB 12804 / NRRL 8165 / MA-4680), this protein is Transaldolase 1.